Reading from the N-terminus, the 426-residue chain is Isovaleryl-CoA dehydrogenase, mitochondrial (426 aa).

The transit peptide at 1–32 (MATAAWLLGRRVASWRMRPPLQSLAGLITQRT) directs the protein to the mitochondrion. N6-acetyllysine; alternate occurs at positions 58 and 78. Lys-58 and Lys-78 each carry N6-succinyllysine; alternate. FAD-binding positions include 165 to 174 (LAMSEPNAGS) and 198 to 200 (WIT). Ser-174 lines the substrate pocket. 222-223 (SR) is a substrate binding site. Residue Lys-241 is modified to N6-acetyllysine. Substrate contacts are provided by residues Tyr-277 and 284 to 287 (DLER). The active-site Proton acceptor is Glu-286. Arg-312 serves as a coordination point for FAD. Lys-318 is subject to N6-succinyllysine. Residues Gln-323 and 380–384 (QCLGG) each bind FAD. 407 to 408 (AG) contacts substrate. FAD is bound at residue 409–411 (TSE).

Belongs to the acyl-CoA dehydrogenase family. In terms of assembly, homotetramer. FAD is required as a cofactor.

The protein localises to the mitochondrion matrix. It carries out the reaction 3-methylbutanoyl-CoA + oxidized [electron-transfer flavoprotein] + H(+) = 3-methylbut-2-enoyl-CoA + reduced [electron-transfer flavoprotein]. It catalyses the reaction pentanoyl-CoA + oxidized [electron-transfer flavoprotein] + H(+) = (2E)-pentenoyl-CoA + reduced [electron-transfer flavoprotein]. The catalysed reaction is hexanoyl-CoA + oxidized [electron-transfer flavoprotein] + H(+) = (2E)-hexenoyl-CoA + reduced [electron-transfer flavoprotein]. The enzyme catalyses butanoyl-CoA + oxidized [electron-transfer flavoprotein] + H(+) = (2E)-butenoyl-CoA + reduced [electron-transfer flavoprotein]. It participates in amino-acid degradation; L-leucine degradation; (S)-3-hydroxy-3-methylglutaryl-CoA from 3-isovaleryl-CoA: step 1/3. Catalyzes the conversion of isovaleryl-CoA/3-methylbutanoyl-CoA to 3-methylbut-2-enoyl-CoA as an intermediate step in the leucine (Leu) catabolic pathway. To a lesser extent, is also able to catalyze the oxidation of other saturated short-chain acyl-CoA thioesters as pentanoyl-CoA, hexenoyl-CoA and butenoyl-CoA. This Bos taurus (Bovine) protein is Isovaleryl-CoA dehydrogenase, mitochondrial (IVD).